A 582-amino-acid chain; its full sequence is Membrane-bound O-acyltransferase GUP1 (582 aa).

The Extracellular segment spans residues 1 to 61; sequence MVIPRYHLIP…IIKQANPKSR (61 aa). The chain crosses the membrane as a helical span at residues 62–82; sequence WSTIEFKFYYLVFLIIVPLMF. The Cytoplasmic segment spans residues 83 to 121; sequence KAGMESANENNPNYPKYEHLLSNGWIFGRKVDNSDQQYR. The chain crosses the membrane as a helical span at residues 122 to 144; that stretch reads FFRNNFPLLCLLIIIHVGLRRVI. The Extracellular portion of the chain corresponds to 145–158; that stretch reads NRIIPLSSKRTYFD. The chain crosses the membrane as a helical span at residues 159–179; that stretch reads FIFGIIFLIGAHGVNVLKLSI. The Cytoplasmic segment spans residues 180 to 195; it reads HLLINYLIGKYIKNYK. A helical membrane pass occupies residues 196–216; that stretch reads LSLWITWIYGISSLFFNEWYG. Over 217 to 294 the chain is Extracellular; sequence NYTLGLSFLS…TAPLPIEDYN (78 aa). A helical membrane pass occupies residues 295–315; that stretch reads IFNYISYLTYTPLFIAGPILT. Topologically, residues 316–343 are cytoplasmic; sequence FNDYIYQSNYQQSSSTKDYHRIMMYLIR. Residues 344-364 form a helical membrane-spanning segment; it reads FIFCLLTLEFILHFMYVVAAS. Topologically, residues 365 to 373 are extracellular; that stretch reads KTKSWEGNL. A helical membrane pass occupies residues 374-394; that stretch reads PFQISMLGMFNLNIIWLKLLI. Over 395–454 the chain is Cytoplasmic; sequence PWRLFRLWSLLDGIDPPENMIRCMDNNFSALAFWRAWHRSYNRWIIRYIYLPMGGGGKYR. 2 helical membrane-spanning segments follow: residues 455-475 and 476-496; these read ILNS…ELKL and LMWG…TMIF. The active site involves His-469. The Cytoplasmic portion of the chain corresponds to 497-507; that stretch reads KKYRNQWWYRH. The chain crosses the membrane as a helical span at residues 508–528; it reads LCGVGAVINIWMMMIANLVGF. Topologically, residues 529 to 548 are extracellular; it reads CLGTDGMWKLLHDLFKTFDG. A helical membrane pass occupies residues 549 to 569; sequence VRFLIISSGALFVGAQIMFEI. The Cytoplasmic portion of the chain corresponds to 570–582; the sequence is RESEMRKGINVRC.

Belongs to the membrane-bound acyltransferase family.

It is found in the cell membrane. It localises to the endoplasmic reticulum membrane. The protein localises to the mitochondrion membrane. Functionally, membrane-bound O-acyltransferase involved in the remodeling of glycosylphosphatidylinositol (GPI) anchors. Acts only on GPI-anchored proteins, but not on free GPI lipids. Also involved in lipid metabolism, having profound effects on sphingolipid-sterol-ordered domains integrity and assembly. Involved in cell integrity and apoptosis. In Candida tropicalis (Yeast), this protein is Membrane-bound O-acyltransferase GUP1 (GUP1).